The following is a 1158-amino-acid chain: Phospholipid-transporting ATPase 1 (1158 aa).

Residues 1 to 15 (MDPRKSIDKPPHHDP) are compositionally biased toward basic and acidic residues. The disordered stretch occupies residues 1–30 (MDPRKSIDKPPHHDPILGVSSRWSVSSKDN). At 1–100 (MDPRKSIDKP…TAKYSVFTFL (100 aa)) the chain is on the cytoplasmic side. The chain crosses the membrane as a helical span at residues 101–122 (PRNLFEQFHRVAYIYFLVIAVL). Over 123 to 127 (NQLPQ) the chain is Extracellular. A helical transmembrane segment spans residues 128-150 (LAVFGRGASIMPLAFVLLVSAIK). The Cytoplasmic segment spans residues 151–329 (DAYEDFRRHR…SRLETRMNLE (179 aa)). A helical membrane pass occupies residues 330–351 (IILLSLFLIVLCTIAAATAAVW). At 352–391 (LRTHRDDLDTILFYRRKDYSERPGGKNYKYYGWGWEIFFT) the chain is on the extracellular side. The chain crosses the membrane as a helical span at residues 392–409 (FFMAVIVYQIMIPISLYI). Topologically, residues 410–914 (SMELVRIGQA…HGHWNYQRMG (505 aa)) are cytoplasmic. Asp457 functions as the 4-aspartylphosphate intermediate in the catalytic mechanism. Mg(2+) contacts are provided by Asp859 and Asp863. Residues 915-934 (YMILYNFYRNAVFVLILFWY) traverse the membrane as a helical segment. At 935 to 948 (VLFTCYTLTTAITE) the chain is on the extracellular side. Residues 949 to 968 (WSSVLYSVIYTAIPTIIIGI) traverse the membrane as a helical segment. The Cytoplasmic segment spans residues 969–998 (LDKDLGRQTLLDHPQLYGVGQRAEGYSTTL). A helical transmembrane segment spans residues 999–1020 (FWYTMIDTIWQSAAIFFIPMFA). The Extracellular segment spans residues 1021 to 1027 (YWGSTID). The chain crosses the membrane as a helical span at residues 1028 to 1050 (TSSLGDLWTIAAVVVVNLHLAMD). Residues 1051 to 1056 (VIRWNW) lie on the Cytoplasmic side of the membrane. A helical membrane pass occupies residues 1057–1077 (ITHAAIWGSIVAACICVIVID). Topologically, residues 1078–1090 (VIPTLPGYWAIFQ) are extracellular. A helical membrane pass occupies residues 1091-1115 (VGKTWMFWFCLLAIVVTSLLPRFAI). Residues 1116-1158 (KFLVEYYRPSDVRIAREAEKLGTFRESQPVGVEMNLIQDPPRR) lie on the Cytoplasmic side of the membrane.

It belongs to the cation transport ATPase (P-type) (TC 3.A.3) family. Type IV subfamily. Expressed in roots, flowers, anthers, leaves, vascular tissues and stems.

It is found in the endoplasmic reticulum membrane. The protein resides in the cell membrane. It catalyses the reaction ATP + H2O + phospholipidSide 1 = ADP + phosphate + phospholipidSide 2.. Its function is as follows. Involved in transport of phospholipids. Contributes to transmembrane flipping of lipids. Has activity with phosphatidylserine and with a much lower efficiency with phosphatidylethanolamine, but not with phosphatidylcholine. The chain is Phospholipid-transporting ATPase 1 from Arabidopsis thaliana (Mouse-ear cress).